The primary structure comprises 128 residues: MKQQVEVKDLKEGKYVIIDDEACVIKSISKSKPGKHGAAKARVEAIGLFDNQKRSYIGSVANKIYVPIVERKSAQVISITGDIAQLMDMGDFSTFEIVIPDEYKDKVKEGEEVSYITALGKIKLDIRT.

Lys-35 bears the Hypusine mark.

Belongs to the eIF-5A family.

Its subcellular location is the cytoplasm. Functionally, functions by promoting the formation of the first peptide bond. In Methanosarcina acetivorans (strain ATCC 35395 / DSM 2834 / JCM 12185 / C2A), this protein is Translation initiation factor 5A (eif5a).